The following is a 1097-amino-acid chain: U3 small nucleolar RNA-associated protein 22 (1097 aa).

Composition is skewed to basic and acidic residues over residues 1-10 (MNGLKREHES) and 18-27 (KTPETEYDSH). A disordered region spans residues 1 to 27 (MNGLKREHESSSSQDGSKTPETEYDSH).

It belongs to the NRAP family. Component of the ribosomal small subunit (SSU) processome.

It localises to the nucleus. Its subcellular location is the nucleolus. Involved in nucleolar processing of pre-18S ribosomal RNA and ribosome assembly. The polypeptide is U3 small nucleolar RNA-associated protein 22 (Schizosaccharomyces pombe (strain 972 / ATCC 24843) (Fission yeast)).